The sequence spans 610 residues: UvrABC system protein C (610 aa).

Residues 16-94 (SQPGVYRMYD…IKLYQPRYNV (79 aa)) enclose the GIY-YIG domain. One can recognise a UVR domain in the interval 204–239 (DQVLTQLISRMETASQNLEFEEAARIRDQIQAVRRV).

The protein belongs to the UvrC family. Interacts with UvrB in an incision complex.

Its subcellular location is the cytoplasm. Its function is as follows. The UvrABC repair system catalyzes the recognition and processing of DNA lesions. UvrC both incises the 5' and 3' sides of the lesion. The N-terminal half is responsible for the 3' incision and the C-terminal half is responsible for the 5' incision. The polypeptide is UvrABC system protein C (Escherichia coli O1:K1 / APEC).